The following is a 193-amino-acid chain: Ion-translocating oxidoreductase complex subunit A (193 aa).

A run of 6 helical transmembrane segments spans residues 4–24, 39–59, 63–83, 102–122, 134–154, and 171–191; these read FLLL…QFLG, IGMS…SYLV, ILLP…VIAV, LLGI…VALL, VIYG…FAAM, and SISM…TGLV.

This sequence belongs to the NqrDE/RnfAE family. In terms of assembly, the complex is composed of six subunits: RnfA, RnfB, RnfC, RnfD, RnfE and RnfG.

Its subcellular location is the cell inner membrane. In terms of biological role, part of a membrane-bound complex that couples electron transfer with translocation of ions across the membrane. In Pseudoalteromonas atlantica (strain T6c / ATCC BAA-1087), this protein is Ion-translocating oxidoreductase complex subunit A.